A 309-amino-acid chain; its full sequence is Probable nitrogen assimilation transcriptional activator (309 aa).

The region spanning 1–57 is the HTH lysR-type domain; sequence MRLEQLQAFLKVAELGSFQQAALQSEVTQSTISRQIQGLESALKCQLFHRGAQAKLT. Positions 18 to 38 form a DNA-binding region, H-T-H motif; sequence FQQAALQSEVTQSTISRQIQG.

The protein belongs to the LysR transcriptional regulatory family.

Functionally, seems to regulate utilization of fixed nitrogen by controlling the expression of a certain gene(s) involved in nitrogen metabolism. The protein is Probable nitrogen assimilation transcriptional activator (ntcB) of Synechocystis sp. (strain ATCC 27184 / PCC 6803 / Kazusa).